A 426-amino-acid polypeptide reads, in one-letter code: Histidine--tRNA ligase (426 aa).

Belongs to the class-II aminoacyl-tRNA synthetase family. As to quaternary structure, homodimer.

It is found in the cytoplasm. It catalyses the reaction tRNA(His) + L-histidine + ATP = L-histidyl-tRNA(His) + AMP + diphosphate + H(+). In Streptococcus gordonii (strain Challis / ATCC 35105 / BCRC 15272 / CH1 / DL1 / V288), this protein is Histidine--tRNA ligase.